The primary structure comprises 432 residues: Serine/threonine-protein phosphatase 2A activator 1 (432 aa).

The tract at residues 322–432 (PYSKVEDEEP…MAPTKAPWAK (111 aa)) is disordered. A compositionally biased stretch (basic and acidic residues) spans 366 to 389 (TVERLARRDGQRAAREKEEREDRA). Over residues 396-412 (TTGAPGATALPPTRAPG) the composition is skewed to low complexity.

It belongs to the PTPA-type PPIase family.

It is found in the cytoplasm. Its subcellular location is the nucleus. It carries out the reaction [protein]-peptidylproline (omega=180) = [protein]-peptidylproline (omega=0). Its function is as follows. PPIases accelerate the folding of proteins. It catalyzes the cis-trans isomerization of proline imidic peptide bonds in oligopeptides. Acts as a regulatory subunit for PP2A-like phosphatases modulating their activity or substrate specificity, probably by inducing a conformational change in the catalytic subunit, a direct target of the PPIase. Can reactivate inactive phosphatase PP2A-phosphatase methylesterase complexes (PP2Ai) in presence of ATP and Mg(2+) by dissociating the inactive form from the complex. The sequence is that of Serine/threonine-protein phosphatase 2A activator 1 (RRD1) from Yarrowia lipolytica (strain CLIB 122 / E 150) (Yeast).